Reading from the N-terminus, the 280-residue chain is Maltodextrin transport system permease protein MalD (280 aa).

6 helical membrane passes run 15–35 (LTYL…LITI), 77–97 (LIIA…AGYA), 110–130 (LVFF…AFFV), 142–162 (WFLI…LMKG), 200–220 (VQAL…SFLL), and 244–264 (IAYF…LFFF). Residues 73 to 265 (YLNTLIIALI…LPICILFFFL (193 aa)) enclose the ABC transmembrane type-1 domain.

The protein belongs to the binding-protein-dependent transport system permease family. MalFG subfamily.

The protein resides in the cell membrane. Its function is as follows. Part of the binding-protein-dependent transport system for maltodextrin; probably responsible for the translocation of the substrate across the membrane. The chain is Maltodextrin transport system permease protein MalD (malD) from Streptococcus pneumoniae (strain ATCC BAA-255 / R6).